Here is a 241-residue protein sequence, read N- to C-terminus: uncharacterized protein (241 aa).

A Cupin type-2 domain is found at 22 to 78; it reads SHKHAYSQFLFPLEGSIDLETEGRQVKLNPDHFLYIPPQCEHRFRSIGRNECLVLDV. Residues 137–235 enclose the HTH araC/xylS-type domain; it reads YASIAYIHSH…GMPPRLYRNT (99 aa). DNA-binding regions (H-T-H motif) lie at residues 154–175 and 202–225; these read KKLA…KKQT and LTVV…TKST.

This is an uncharacterized protein from Bacillus subtilis (strain 168).